The following is a 491-amino-acid chain: AAA-ATPase At2g46620 (491 aa).

Residues 1-21 (MGILWDSFLLLLVSTFALFLV) form a helical membrane-spanning segment. Residue 238 to 245 (GPSGTGKS) coordinates ATP. The interval 423–460 (GTGRRLLLENGSRKSTSEDVSDDMSGSLCGGGGGSSPA) is disordered.

Belongs to the AAA ATPase family. BCS1 subfamily. Mg(2+) is required as a cofactor.

The protein localises to the membrane. It catalyses the reaction ATP + H2O = ADP + phosphate + H(+). The sequence is that of AAA-ATPase At2g46620 from Arabidopsis thaliana (Mouse-ear cress).